A 355-amino-acid polypeptide reads, in one-letter code: Glucose-6-phosphatase 2 (355 aa).

At 1 to 24 (MDFLHRSGVLIIHHLQEDYRTYYG) the chain is on the lumenal side. Residues 25–45 (FLNFMSNVGDPRNIFSIYFPL) traverse the membrane as a helical segment. Residues 46-56 (WFQLNQNVGTK) are Cytoplasmic-facing. The helical transmembrane segment at 57-77 (MIWVAVIGDWFNLIFKWILFG) threads the bilayer. At 78–115 (HRPYWWIQETEIYPNHSSPCLEQFPTTCETGPGSPSGH) the chain is on the lumenal side. Substrate is bound at residue R79. N-linked (GlcNAc...) asparagine glycosylation occurs at N92. The Proton donor role is filled by H115. The helical transmembrane segment at 116-136 (AMGSSCVWYVMVTAALSYTIS) threads the bilayer. Residues 137 to 146 (RMEESSVTLH) are Cytoplasmic-facing. Residues 147–167 (RLTWSFLWSVFWLIQISVCIS) traverse the membrane as a helical segment. A topological domain (lumenal) is located at residue R168. A substrate-binding site is contributed by R168. A helical membrane pass occupies residues 169-189 (VFIATHFPHQVILGVIGGMLV). Residue H174 is the Nucleophile of the active site. Topologically, residues 190–211 (AEAFEHTPGVHMASLSVYLKTN) are cytoplasmic. Residues 212–232 (VFLFLFALGFYLLLRLFGIDL) form a helical membrane-spanning segment. Residues 233–252 (LWSVPIAKKWCANPDWIHID) are Lumenal-facing. Residues 253-273 (STPFAGLVRNLGVLFGLGFAI) form a helical membrane-spanning segment. The Cytoplasmic segment spans residues 274–290 (NSEMFLRSCQGENGTKP). Residues 291–307 (SFRLLCALTSLTTMQLY) form a helical membrane-spanning segment. Topologically, residues 308-318 (RFIKIPTHAEP) are lumenal. A helical membrane pass occupies residues 319–339 (LFYLLSFCKSASIPLMVVALI). Over 340–355 (PYCVHMLMRPGDKKTK) the chain is Cytoplasmic. Positions 352–355 (KKTK) match the Prevents secretion from ER motif.

This sequence belongs to the glucose-6-phosphatase family. Post-translationally, N-glycosylated; the non-glycosylated form is more unstable and is degraded through the proteasome. Specifically expressed in pancreatic islet cells, in particular those of beta-cell origin. Not detected in testis, kidney, muscle, liver, lung, spleen, brain, pituitary, gastric fundus or heart.

The protein localises to the endoplasmic reticulum membrane. The enzyme catalyses D-glucose 6-phosphate + H2O = D-glucose + phosphate. Its pathway is carbohydrate biosynthesis; gluconeogenesis. Its function is as follows. May hydrolyze glucose-6-phosphate to glucose in the endoplasmic reticulum. May be responsible for glucose production through glycogenolysis and gluconeogenesis. This Mus musculus (Mouse) protein is Glucose-6-phosphatase 2 (G6pc2).